A 196-amino-acid polypeptide reads, in one-letter code: Small ribosomal subunit protein uS4c (196 aa).

Positions 22–42 (TRKTPKSGSNPKKKFHSGKKE) are disordered. One can recognise an S4 RNA-binding domain in the interval 89–169 (MRLDNILFRL…LPKHLTIDTL (81 aa)).

Belongs to the universal ribosomal protein uS4 family. Part of the 30S ribosomal subunit. Contacts protein S5. The interaction surface between S4 and S5 is involved in control of translational fidelity.

It localises to the plastid. The protein resides in the chloroplast. In terms of biological role, one of the primary rRNA binding proteins, it binds directly to 16S rRNA where it nucleates assembly of the body of the 30S subunit. Functionally, with S5 and S12 plays an important role in translational accuracy. In Melica altissima (Siberian melic grass), this protein is Small ribosomal subunit protein uS4c (rps4).